The primary structure comprises 484 residues: Monocarboxylate transporter 2 (484 aa).

Topologically, residues 1 to 16 are cytoplasmic; the sequence is MPAPTAVPPPHPLPPD. The helical transmembrane segment at 17–37 threads the bilayer; sequence GGWGWVVVGASFISIGFSYAF. The Extracellular portion of the chain corresponds to 38-60; the sequence is PKSVTVFFKDIQEIFRAGHSKVA. Residues 61 to 81 form a helical membrane-spanning segment; that stretch reads WISSIMLAVMYAGGPISSVLV. Residues 82-87 lie on the Cytoplasmic side of the membrane; the sequence is NKYGSR. A helical membrane pass occupies residues 88–108; the sequence is PVVVIGGLLCCTGMILASFST. The Extracellular segment spans residues 109 to 116; the sequence is SMIQLYLT. A helical membrane pass occupies residues 117–137; sequence IGFISGLGLAFNLQPALTILG. Residues 138-144 are Cytoplasmic-facing; sequence KYFYRRR. The helical transmembrane segment at 145–165 threads the bilayer; sequence PLASGLAMTGSPVFLSSLAPF. Residues 166–174 lie on the Extracellular side of the membrane; that stretch reads NQYLFNSYG. Residues 175–195 traverse the membrane as a helical segment; sequence LKGSFLILGGIFLHSCVAGSL. The Cytoplasmic segment spans residues 196-245; sequence MRPVGTSQQSPKSKSKVSSRHDSSTKKAPKLTLAQRINMFLDFSLFKHRG. Residues 198-223 are disordered; it reads PVGTSQQSPKSKSKVSSRHDSSTKKA. The chain crosses the membrane as a helical span at residues 246–266; sequence FLIYLSGNVIMFLGFFAPVIF. Residues 267-281 lie on the Extracellular side of the membrane; it reads LSPYAKNRGVDDYKA. Residues 282–302 traverse the membrane as a helical segment; sequence AYLLSVMAFVDMFSRPCGGLI. The Cytoplasmic segment spans residues 303–311; sequence ANTRLVRPR. The helical transmembrane segment at 312-332 threads the bilayer; it reads IQYFFSLAIVFTGVCHLLCPL. The Extracellular segment spans residues 333 to 337; the sequence is AESYT. A helical membrane pass occupies residues 338–358; it reads ALVVYAIFFGYGFGSVSSILF. At 359 to 372 the chain is on the cytoplasmic side; that stretch reads ETLMDLVGPARFSS. The helical transmembrane segment at 373-393 threads the bilayer; sequence AVGLVTIVECCPVLLGPPLAG. At 394-405 the chain is on the extracellular side; sequence KLVDETGEHKYL. Residues 406–426 traverse the membrane as a helical segment; that stretch reads FVASGAIVVLAGIWLFIGNAI. At 427-484 the chain is on the cytoplasmic side; sequence NYRLLAKERKREKARKKKSPNRHSKELESLSKSNQDDVAVRVPQAHRSPSDKERESNI. Positions 437 to 484 are disordered; that stretch reads REKARKKKSPNRHSKELESLSKSNQDDVAVRVPQAHRSPSDKERESNI. Over residues 438–448 the composition is skewed to basic residues; it reads EKARKKKSPNR. Basic and acidic residues-rich tracts occupy residues 449–465 and 474–484; these read HSKE…DDVA and SPSDKERESNI.

This sequence belongs to the major facilitator superfamily. Monocarboxylate porter (TC 2.A.1.13) family. In terms of assembly, homodimer. Interacts with GRID2IP. Interacts with EMB; interaction mediates SLC16A7 targeting to the plasma membrane. Interacts with isoform 2 of BSG.

It is found in the cell membrane. The protein localises to the basolateral cell membrane. Its subcellular location is the cytoplasm. It carries out the reaction 3-methyl-2-oxobutanoate(out) + H(+)(out) = 3-methyl-2-oxobutanoate(in) + H(+)(in). The catalysed reaction is (S)-lactate(in) + H(+)(in) = (S)-lactate(out) + H(+)(out). The enzyme catalyses acetoacetate(out) + H(+)(out) = acetoacetate(in) + H(+)(in). It catalyses the reaction (R)-3-hydroxybutanoate(out) + H(+)(out) = (R)-3-hydroxybutanoate(in) + H(+)(in). It carries out the reaction 4-methyl-2-oxopentanoate(out) + H(+)(out) = 4-methyl-2-oxopentanoate(in) + H(+)(in). The catalysed reaction is pyruvate(out) + H(+)(out) = pyruvate(in) + H(+)(in). The enzyme catalyses (S)-3-hydroxybutanoate(out) + H(+)(out) = (S)-3-hydroxybutanoate(in) + H(+)(in). Transport activity exhibits steep dependence on substrate concentration. Substrate concentration sensitivity of SLC16A7 arises from the strong inter-subunit cooperativity of the SLC16A7 dimer during transport. Inhibited by AR-C155858. In terms of biological role, proton-coupled monocarboxylate symporter. Catalyzes the rapid transport across the plasma membrane of monocarboxylates such as L-lactate, pyruvate and ketone bodies, acetoacetate, beta-hydroxybutyrate and acetate. Dimerization is functionally required and both subunits work cooperatively in transporting substrate. The protein is Monocarboxylate transporter 2 (SLC16A7) of Meriones unguiculatus (Mongolian jird).